The primary structure comprises 382 residues: Glucose-1-phosphate adenylyltransferase (382 aa).

Alpha-D-glucose 1-phosphate-binding positions include tyrosine 100, glycine 165, 180-181 (EK), and serine 191.

This sequence belongs to the bacterial/plant glucose-1-phosphate adenylyltransferase family. In terms of assembly, homotetramer.

The enzyme catalyses alpha-D-glucose 1-phosphate + ATP + H(+) = ADP-alpha-D-glucose + diphosphate. It functions in the pathway glycan biosynthesis; glycogen biosynthesis. Its function is as follows. Involved in the biosynthesis of ADP-glucose, a building block required for the elongation reactions to produce glycogen. Catalyzes the reaction between ATP and alpha-D-glucose 1-phosphate (G1P) to produce pyrophosphate and ADP-Glc. The sequence is that of Glucose-1-phosphate adenylyltransferase from Clostridium novyi (strain NT).